The chain runs to 511 residues: 2,3-bisphosphoglycerate-independent phosphoglycerate mutase (511 aa).

Asp14 and Ser64 together coordinate Mn(2+). The active-site Phosphoserine intermediate is the Ser64. Substrate is bound by residues His125, Arg155–Asp156, Arg187, Arg193, Arg259–Arg262, and Lys333. Positions 400, 404, 441, 442, and 460 each coordinate Mn(2+).

The protein belongs to the BPG-independent phosphoglycerate mutase family. In terms of assembly, monomer. It depends on Mn(2+) as a cofactor.

The catalysed reaction is (2R)-2-phosphoglycerate = (2R)-3-phosphoglycerate. Its pathway is carbohydrate degradation; glycolysis; pyruvate from D-glyceraldehyde 3-phosphate: step 3/5. Functionally, catalyzes the interconversion of 2-phosphoglycerate and 3-phosphoglycerate. The chain is 2,3-bisphosphoglycerate-independent phosphoglycerate mutase from Pseudomonas putida (strain ATCC 47054 / DSM 6125 / CFBP 8728 / NCIMB 11950 / KT2440).